Consider the following 600-residue polypeptide: Jacalin-related lectin 18 (600 aa).

Jacalin-type lectin domains are found at residues 12-158, 161-303, 304-447, and 454-597; these read TQRL…YFTC, PTRM…YFTT, SPFI…YFRL, and GEKV…HVLP.

This sequence belongs to the jacalin lectin family.

This is Jacalin-related lectin 18 (JAL18) from Arabidopsis thaliana (Mouse-ear cress).